Here is a 32-residue protein sequence, read N- to C-terminus: KRGFLDVITHVGKAVGKAALNAVNEMVNQGEQ.

Position 29 is a glutamine amide (Q29). A propeptide spanning residues 31 to 32 (EQ) is cleaved from the precursor.

As to expression, expressed by the skin glands.

The protein resides in the secreted. Its function is as follows. Has antimicrobial activity. In Cruziohyla calcarifer (Splendid leaf frog), this protein is Cruzioseptin-9.